The chain runs to 150 residues: Large ribosomal subunit protein bL9 (150 aa).

The protein belongs to the bacterial ribosomal protein bL9 family.

Functionally, binds to the 23S rRNA. This chain is Large ribosomal subunit protein bL9, found in Leptothrix cholodnii (strain ATCC 51168 / LMG 8142 / SP-6) (Leptothrix discophora (strain SP-6)).